The following is a 231-amino-acid chain: Ureidoacrylate amidohydrolase RutB (231 aa).

The active-site Proton acceptor is the D25. The active site involves K134. The active-site Nucleophile is the C167.

Belongs to the isochorismatase family. RutB subfamily.

The enzyme catalyses (Z)-3-ureidoacrylate + H2O + H(+) = (Z)-3-aminoacrylate + NH4(+) + CO2. It carries out the reaction (Z)-3-ureidoacrylate + H2O = (Z)-3-aminoacrylate + carbamate + H(+). The catalysed reaction is (Z)-2-methylureidoacrylate + H2O + H(+) = (Z)-2-methylaminoacrylate + NH4(+) + CO2. Functionally, hydrolyzes ureidoacrylate to form aminoacrylate and carbamate. The carbamate hydrolyzes spontaneously, thereby releasing one of the nitrogen atoms of the pyrimidine ring as ammonia and one of its carbon atoms as CO2. In Escherichia coli O139:H28 (strain E24377A / ETEC), this protein is Ureidoacrylate amidohydrolase RutB.